Here is a 1801-residue protein sequence, read N- to C-terminus: U3 small nucleolar RNA-associated protein 10 (1801 aa).

2 helical membrane-spanning segments follow: residues 102-122 and 136-156; these read LALV…EWLI and ILTF…AILP. An HEAT 1 repeat occupies 581–619; it reads DVDVQALLPFMLIALADPSERVRSGAVDALANIGKVVDK. 2 helical membrane passes run 939–959 and 995–1015; these read IQSG…AIVN and ALLL…HSVM. 5 HEAT repeats span residues 1038–1076, 1110–1148, 1244–1282, 1288–1327, and 1756–1794; these read DQTI…AFEH, YSMD…DSLK, TLTT…QSPE, QTRM…KYGK, and LALL…VLGE.

The protein belongs to the HEATR1/UTP10 family. In terms of assembly, component of the ribosomal small subunit (SSU) processome.

It localises to the nucleus. The protein resides in the nucleolus. Its subcellular location is the membrane. Functionally, involved in nucleolar processing of pre-18S ribosomal RNA. Involved in ribosome biosynthesis. The protein is U3 small nucleolar RNA-associated protein 10 of Emericella nidulans (strain FGSC A4 / ATCC 38163 / CBS 112.46 / NRRL 194 / M139) (Aspergillus nidulans).